A 218-amino-acid chain; its full sequence is 3,4-dihydroxy-2-butanone 4-phosphate synthase (218 aa).

D-ribulose 5-phosphate contacts are provided by residues 37-38 (RE), D42, 150-154 (RGGHT), and E174. E38 is a binding site for Mg(2+). Mg(2+) is bound at residue H153.

Belongs to the DHBP synthase family. Homodimer. The cofactor is Mg(2+). Mn(2+) serves as cofactor.

It carries out the reaction D-ribulose 5-phosphate = (2S)-2-hydroxy-3-oxobutyl phosphate + formate + H(+). It participates in cofactor biosynthesis; riboflavin biosynthesis; 2-hydroxy-3-oxobutyl phosphate from D-ribulose 5-phosphate: step 1/1. Catalyzes the conversion of D-ribulose 5-phosphate to formate and 3,4-dihydroxy-2-butanone 4-phosphate. The sequence is that of 3,4-dihydroxy-2-butanone 4-phosphate synthase from Erwinia tasmaniensis (strain DSM 17950 / CFBP 7177 / CIP 109463 / NCPPB 4357 / Et1/99).